Reading from the N-terminus, the 120-residue chain is NAD(P)H-quinone oxidoreductase subunit 3, chloroplastic (120 aa).

The next 3 membrane-spanning stretches (helical) occupy residues Ile9–Gly29, Met64–Met84, and Val88–Leu108.

This sequence belongs to the complex I subunit 3 family. As to quaternary structure, NDH is composed of at least 16 different subunits, 5 of which are encoded in the nucleus.

It localises to the plastid. Its subcellular location is the chloroplast thylakoid membrane. It catalyses the reaction a plastoquinone + NADH + (n+1) H(+)(in) = a plastoquinol + NAD(+) + n H(+)(out). The catalysed reaction is a plastoquinone + NADPH + (n+1) H(+)(in) = a plastoquinol + NADP(+) + n H(+)(out). NDH shuttles electrons from NAD(P)H:plastoquinone, via FMN and iron-sulfur (Fe-S) centers, to quinones in the photosynthetic chain and possibly in a chloroplast respiratory chain. The immediate electron acceptor for the enzyme in this species is believed to be plastoquinone. Couples the redox reaction to proton translocation, and thus conserves the redox energy in a proton gradient. This Aethionema cordifolium (Lebanon stonecress) protein is NAD(P)H-quinone oxidoreductase subunit 3, chloroplastic.